Reading from the N-terminus, the 528-residue chain is Oxamate amidohydrolase proenzyme (528 aa).

Catalysis depends on Thr342, which acts as the Nucleophile. Substrate is bound at residue 424–425; the sequence is GG.

The protein belongs to the gamma-glutamyltransferase family. As to quaternary structure, heterodimer that consists of a 35.5 kDa large (alpha) subunit and a 20 kDa small (beta) subunit, which are synthesized from a single polypeptide. In terms of processing, cleaved by autocatalysis into a large (alpha) and a small (beta) subunit.

The catalysed reaction is oxamate + H2O = oxalate + NH4(+). Functionally, involved in the uric acid degradation pathway. Catalyzes the conversion of oxamate to oxalate. This Klebsiella pneumoniae subsp. pneumoniae (strain ATCC 700721 / MGH 78578) protein is Oxamate amidohydrolase proenzyme.